Reading from the N-terminus, the 372-residue chain is Glutamate 5-kinase (372 aa).

Lysine 14 is a binding site for ATP. Residues serine 55, aspartate 142, and asparagine 154 each contribute to the substrate site. ATP-binding positions include 174–175 and 216–222; these read SD and TGGMETK. Residues 279–357 form the PUA domain; that stretch reads QGSIIVDLGA…WEIADVLGHK (79 aa).

It belongs to the glutamate 5-kinase family.

It localises to the cytoplasm. The catalysed reaction is L-glutamate + ATP = L-glutamyl 5-phosphate + ADP. Its pathway is amino-acid biosynthesis; L-proline biosynthesis; L-glutamate 5-semialdehyde from L-glutamate: step 1/2. In terms of biological role, catalyzes the transfer of a phosphate group to glutamate to form L-glutamate 5-phosphate. This chain is Glutamate 5-kinase, found in Carboxydothermus hydrogenoformans (strain ATCC BAA-161 / DSM 6008 / Z-2901).